Reading from the N-terminus, the 323-residue chain is o-succinylbenzoate synthase (323 aa).

The active-site Proton donor is Lys134. Residues Asp162, Glu191, and Asp214 each coordinate Mg(2+). The active-site Proton acceptor is the Lys236.

The protein belongs to the mandelate racemase/muconate lactonizing enzyme family. MenC type 1 subfamily. Requires a divalent metal cation as cofactor.

It catalyses the reaction (1R,6R)-6-hydroxy-2-succinyl-cyclohexa-2,4-diene-1-carboxylate = 2-succinylbenzoate + H2O. It participates in quinol/quinone metabolism; 1,4-dihydroxy-2-naphthoate biosynthesis; 1,4-dihydroxy-2-naphthoate from chorismate: step 4/7. Its pathway is quinol/quinone metabolism; menaquinone biosynthesis. In terms of biological role, converts 2-succinyl-6-hydroxy-2,4-cyclohexadiene-1-carboxylate (SHCHC) to 2-succinylbenzoate (OSB). In Yersinia pseudotuberculosis serotype O:1b (strain IP 31758), this protein is o-succinylbenzoate synthase.